Consider the following 354-residue polypeptide: UDP-N-acetylglucosamine--N-acetylmuramyl-(pentapeptide) pyrophosphoryl-undecaprenol N-acetylglucosamine transferase (354 aa).

Residues 15–17 (TGG), Asn-127, Arg-163, Ser-191, Ile-242, 261–266 (ALTVSE), and Gln-286 contribute to the UDP-N-acetyl-alpha-D-glucosamine site.

Belongs to the glycosyltransferase 28 family. MurG subfamily.

It localises to the cell inner membrane. The catalysed reaction is di-trans,octa-cis-undecaprenyl diphospho-N-acetyl-alpha-D-muramoyl-L-alanyl-D-glutamyl-meso-2,6-diaminopimeloyl-D-alanyl-D-alanine + UDP-N-acetyl-alpha-D-glucosamine = di-trans,octa-cis-undecaprenyl diphospho-[N-acetyl-alpha-D-glucosaminyl-(1-&gt;4)]-N-acetyl-alpha-D-muramoyl-L-alanyl-D-glutamyl-meso-2,6-diaminopimeloyl-D-alanyl-D-alanine + UDP + H(+). The protein operates within cell wall biogenesis; peptidoglycan biosynthesis. In terms of biological role, cell wall formation. Catalyzes the transfer of a GlcNAc subunit on undecaprenyl-pyrophosphoryl-MurNAc-pentapeptide (lipid intermediate I) to form undecaprenyl-pyrophosphoryl-MurNAc-(pentapeptide)GlcNAc (lipid intermediate II). This Pasteurella multocida (strain Pm70) protein is UDP-N-acetylglucosamine--N-acetylmuramyl-(pentapeptide) pyrophosphoryl-undecaprenol N-acetylglucosamine transferase.